A 414-amino-acid polypeptide reads, in one-letter code: Esterase FrsA (414 aa).

Belongs to the FrsA family.

The catalysed reaction is a carboxylic ester + H2O = an alcohol + a carboxylate + H(+). In terms of biological role, catalyzes the hydrolysis of esters. The sequence is that of Esterase FrsA from Enterobacter sp. (strain 638).